The primary structure comprises 356 residues: Arginine kinase Lit v 2.0101 (356 aa).

The 83-residue stretch at 9–91 (KLEAGFKKLE…FDPIIEDYHV (83 aa)) folds into the Phosphagen kinase N-terminal domain. 64–68 (GVGIY) lines the L-arginine pocket. A Phosphagen kinase C-terminal domain is found at 119–356 (FVISTRVRCG…LELIKIEKEM (238 aa)). ATP-binding positions include 122–126 (STRVR) and histidine 185. Glutamate 225 contacts L-arginine. Arginine 229 is a binding site for ATP. Cysteine 271 lines the L-arginine pocket. ATP is bound by residues 280–284 (RASVH) and 309–314 (RGTRGE). Glutamate 314 contributes to the L-arginine binding site.

This sequence belongs to the ATP:guanido phosphotransferase family. Monomer. In terms of tissue distribution, muscle (at protein level).

It carries out the reaction L-arginine + ATP = N(omega)-phospho-L-arginine + ADP + H(+). It catalyses the reaction dTDP + ATP = dTTP + ADP. In terms of biological role, catalyzes the reversible transfer of high energy ATP gamma-phosphate group to L-arginine. Has nucleoside diphosphate kinase-like activity toward dTDP. Binds and phosphorylates dTDP using ATP as a phosphate donor. Does not phosphorylate dADP, dCDP, dGDP, dTMP or thymidine. The protein is Arginine kinase Lit v 2.0101 of Penaeus vannamei (Whiteleg shrimp).